A 197-amino-acid polypeptide reads, in one-letter code: Small ribosomal subunit protein uS4 (197 aa).

The S4 RNA-binding domain occupies 87–147 (LRLDNVLFRL…EKSKSSARYK (61 aa)).

It belongs to the universal ribosomal protein uS4 family. Part of the 30S ribosomal subunit. Contacts protein S5. The interaction surface between S4 and S5 is involved in control of translational fidelity.

In terms of biological role, one of the primary rRNA binding proteins, it binds directly to 16S rRNA where it nucleates assembly of the body of the 30S subunit. Functionally, with S5 and S12 plays an important role in translational accuracy. This Lachnospira eligens (strain ATCC 27750 / DSM 3376 / VPI C15-48 / C15-B4) (Eubacterium eligens) protein is Small ribosomal subunit protein uS4.